Here is a 245-residue protein sequence, read N- to C-terminus: Orotidine 5'-phosphate decarboxylase (245 aa).

Substrate is bound by residues Asp-22, Lys-44, 71–80, Thr-131, Arg-192, Gln-201, Gly-221, and Arg-222; that span reads DLKFHDIPNT. Lys-73 functions as the Proton donor in the catalytic mechanism.

The protein belongs to the OMP decarboxylase family. Type 1 subfamily. Homodimer.

The enzyme catalyses orotidine 5'-phosphate + H(+) = UMP + CO2. Its pathway is pyrimidine metabolism; UMP biosynthesis via de novo pathway; UMP from orotate: step 2/2. Its function is as follows. Catalyzes the decarboxylation of orotidine 5'-monophosphate (OMP) to uridine 5'-monophosphate (UMP). This is Orotidine 5'-phosphate decarboxylase from Klebsiella pneumoniae (strain 342).